The primary structure comprises 306 residues: Serine/threonine-protein phosphatase PP2A-2 catalytic subunit (306 aa).

Aspartate 54, histidine 56, aspartate 82, and asparagine 114 together coordinate Mn(2+). The active-site Proton donor is the histidine 115. 2 residues coordinate Mn(2+): histidine 164 and histidine 238. Position 306 is a leucine methyl ester (leucine 306).

Belongs to the PPP phosphatase family. PP-2A subfamily. In terms of assembly, PP2A consists of a common heterodimeric core enzyme, composed of a 36 kDa catalytic subunit (subunit C) and a 65 kDa constant regulatory subunit (subunit A), that associates with a variety of regulatory subunits such as subunits B (the R2/B/PR55/B55, R3/B''/PR72/PR130/PR59 and R5/B'/B56 families). Interacts with B'THETA. Interacts with HDA14. Interacts with SRK2E/OST1. Interacts with TAP46. The cofactor is Mn(2+). Post-translationally, reversibly methyl esterified on Leu-306 by leucine carboxyl methyltransferase 1 (LCMT1) and pectin methylesterase 1 (PME1). Carboxyl methylation influences the affinity of the catalytic subunit for the different regulatory subunits, thereby modulating the PP2A holoenzyme's substrate specificity, enzyme activity and cellular localization. Phosphorylation of either threonine (by autophosphorylation-activated protein kinase) or tyrosine results in inactivation of the phosphatase. Auto-dephosphorylation has been suggested as a mechanism for reactivation. In terms of tissue distribution, expressed in root meristem, emerging lateral roots, leaf vasculature, stipules, guard cells, anthers and pollen grains.

It localises to the cytoplasm. The protein localises to the cytosol. The protein resides in the nucleus. Its subcellular location is the peroxisome. The enzyme catalyses O-phospho-L-seryl-[protein] + H2O = L-seryl-[protein] + phosphate. The catalysed reaction is O-phospho-L-threonyl-[protein] + H2O = L-threonyl-[protein] + phosphate. In terms of biological role, dephosphorylates and activates the actin-depolymerizing factor ADF1, which, in turn, regulates actin cytoskeleton remodeling and is involved in the blue light photoreceptor PHOT2-mediated chloroplast avoidance movements. Associates with the serine/threonine-protein phosphatase PP2A regulatory subunits A and B' to positively regulates beta-oxidation of fatty acids and protoauxins in peroxisomes by dephosphorylating peroxisomal beta-oxidation-related proteins. Acts as a negative regulator of abscisic acid (ABA) signaling. May regulate ABA-dependent gene expression. Involved in the light-dependent activation of nitrate reductase. This is Serine/threonine-protein phosphatase PP2A-2 catalytic subunit from Arabidopsis thaliana (Mouse-ear cress).